The chain runs to 345 residues: Ferrochelatase (345 aa).

Residues histidine 215 and glutamate 296 each coordinate Fe cation.

This sequence belongs to the ferrochelatase family.

It localises to the cytoplasm. It catalyses the reaction heme b + 2 H(+) = protoporphyrin IX + Fe(2+). Its pathway is porphyrin-containing compound metabolism; protoheme biosynthesis; protoheme from protoporphyrin-IX: step 1/1. Functionally, catalyzes the ferrous insertion into protoporphyrin IX. In Rhodopseudomonas palustris (strain ATCC BAA-98 / CGA009), this protein is Ferrochelatase.